Consider the following 209-residue polypeptide: Lipopolysaccharide export system protein LptC (209 aa).

The helical transmembrane segment at 7–26 threads the bilayer; it reads NIRWNVILGVIALCALAWFY.

Belongs to the LptC family. Component of the lipopolysaccharide transport and assembly complex. Interacts with LptA and the LptBFG transporter complex.

It is found in the cell inner membrane. Functionally, involved in the assembly of lipopolysaccharide (LPS). Required for the translocation of LPS from the inner membrane to the outer membrane. Facilitates the transfer of LPS from the inner membrane to the periplasmic protein LptA. Could be a docking site for LptA. The protein is Lipopolysaccharide export system protein LptC of Haemophilus influenzae (strain ATCC 51907 / DSM 11121 / KW20 / Rd).